Consider the following 399-residue polypeptide: S-adenosylmethionine synthase (399 aa).

An ATP-binding site is contributed by His-15. Residue Asp-17 participates in Mg(2+) binding. Glu-43 lines the K(+) pocket. Residues Glu-56 and Gln-99 each contribute to the L-methionine site. A flexible loop region spans residues 99–109 (QSPDIARGVNR). Residues 166 to 168 (DAK), 232 to 233 (RF), Asp-241, 247 to 248 (RK), Ala-264, and Lys-268 contribute to the ATP site. Residue Asp-241 coordinates L-methionine. Lys-272 lines the L-methionine pocket.

It belongs to the AdoMet synthase family. Homotetramer; dimer of dimers. Requires Mg(2+) as cofactor. K(+) serves as cofactor.

It is found in the cytoplasm. It catalyses the reaction L-methionine + ATP + H2O = S-adenosyl-L-methionine + phosphate + diphosphate. The protein operates within amino-acid biosynthesis; S-adenosyl-L-methionine biosynthesis; S-adenosyl-L-methionine from L-methionine: step 1/1. Its function is as follows. Catalyzes the formation of S-adenosylmethionine (AdoMet) from methionine and ATP. The overall synthetic reaction is composed of two sequential steps, AdoMet formation and the subsequent tripolyphosphate hydrolysis which occurs prior to release of AdoMet from the enzyme. The sequence is that of S-adenosylmethionine synthase from Nitrosospira multiformis (strain ATCC 25196 / NCIMB 11849 / C 71).